We begin with the raw amino-acid sequence, 262 residues long: Spindlin-W (262 aa).

The segment at 1-49 (MKTPFGKSPAQRSRADAGHTRVSASMMKKRTSHKKHRNNVGPSKPISQP) is disordered. The span at 27-38 (MKKRTSHKKHRN) shows a compositional bias: basic residues.

This sequence belongs to the SPIN/STSY family. As to expression, expressed predominantly in ovarian granulosa and thecal cell.

Its subcellular location is the nucleus. In terms of biological role, may play a role in mitosis. The protein is Spindlin-W (SPINW) of Gallus gallus (Chicken).